The primary structure comprises 1098 residues: Bifunctional helicase and thymine dioxygenase JBP2 (1098 aa).

A thymine dioxygenase region spans residues 1–540 (MLNGLTRVST…PPLFVPTRLA (540 aa)). Fe cation contacts are provided by His415, Asp417, and His465. Arg479 is a binding site for 2-oxoglutarate. The segment at 541–1098 (SHLAPVQLAA…RYQESVRESE (558 aa)) is DNA Helicase. The Helicase ATP-binding domain occupies 555-730 (VERTEKQSGC…YRLVGWVNKG (176 aa)). 568 to 575 (MTMGLGKT) contributes to the ATP binding site. The DEAH box signature appears at 681-684 (DEGH). Residues 897 to 1057 (VLVDIVLRVQ…ALPDELEDCA (161 aa)) form the Helicase C-terminal domain.

The protein in the C-terminal section; belongs to the SNF2/RAD54 helicase family. In the N-terminal section; belongs to the TET family. JBP2 subfamily. It depends on Fe(2+) as a cofactor.

Its subcellular location is the nucleus. The catalysed reaction is ATP + H2O = ADP + phosphate + H(+). It catalyses the reaction thymine + 2-oxoglutarate + O2 = 5-hydroxymethyluracil + succinate + CO2. Functionally, dioxygenase that catalyzes the first step of DNA base J (beta-d-glucosyl-HOMedU) biosynthesis by converting thymine to 5-hydroxymethyluracil (HOMedU). DNA base J is a hypermodified thymidine residue found in the genome of kinetoplastid parasites, which is localized primarily to repetitive DNA, namely the telomeres, and is implicated in the regulation of antigenic variation. Probably also acts as a DNA helicase. Recognizes and binds specific regions of the genome, hydrolyzes ATP and allows the DNA base J de novo synthesis. Involved in initial synthesis of DNA base J, JBP1 being able to act via the basal level of DNA base J and propagate further synthesis. In contrast to JBP1, it does not specifically bind DNA base J, however it binds chromatin. The sequence is that of Bifunctional helicase and thymine dioxygenase JBP2 (JBP2) from Leishmania tarentolae (Sauroleishmania tarentolae).